The following is a 400-amino-acid chain: uncharacterized protein (400 aa).

ATP is bound at residue 36–43 (GSINSGKT).

This sequence belongs to the archaeal ATPase family.

This is an uncharacterized protein from Methanocaldococcus jannaschii (strain ATCC 43067 / DSM 2661 / JAL-1 / JCM 10045 / NBRC 100440) (Methanococcus jannaschii).